Here is a 362-residue protein sequence, read N- to C-terminus: Large ribosomal subunit protein uL3 (362 aa).

The interval 340–362 is disordered; sequence RPPKKKPPVQRPQITYVSVESKQ. A compositionally biased stretch (polar residues) spans 351-362; sequence PQITYVSVESKQ.

It belongs to the universal ribosomal protein uL3 family. In terms of assembly, part of the 50S ribosomal subunit. Forms a cluster with proteins L14 and L24e.

Functionally, one of the primary rRNA binding proteins, it binds directly near the 3'-end of the 23S rRNA, where it nucleates assembly of the 50S subunit. The chain is Large ribosomal subunit protein uL3 from Pyrococcus horikoshii (strain ATCC 700860 / DSM 12428 / JCM 9974 / NBRC 100139 / OT-3).